Here is a 389-residue protein sequence, read N- to C-terminus: 8-amino-7-oxononanoate synthase (389 aa).

R31 lines the substrate pocket. 109-110 (GY) serves as a coordination point for pyridoxal 5'-phosphate. H134 contacts substrate. Pyridoxal 5'-phosphate is bound by residues S180, 205–208 (DEAH), and 236–239 (TLSK). K239 bears the N6-(pyridoxal phosphate)lysine mark. T349 lines the substrate pocket.

The protein belongs to the class-II pyridoxal-phosphate-dependent aminotransferase family. BioF subfamily. Homodimer. Requires pyridoxal 5'-phosphate as cofactor.

The catalysed reaction is 6-carboxyhexanoyl-[ACP] + L-alanine + H(+) = (8S)-8-amino-7-oxononanoate + holo-[ACP] + CO2. Its pathway is cofactor biosynthesis; biotin biosynthesis. In terms of biological role, catalyzes the decarboxylative condensation of pimeloyl-[acyl-carrier protein] and L-alanine to produce 8-amino-7-oxononanoate (AON), [acyl-carrier protein], and carbon dioxide. In Mycobacterium marinum (strain ATCC BAA-535 / M), this protein is 8-amino-7-oxononanoate synthase.